A 161-amino-acid chain; its full sequence is Non-specific lipid transfer protein GPI-anchored 24 (161 aa).

A signal peptide spans 1-23 (MAQTTTLILLLATLLVAATTVSG). Intrachain disulfides connect cysteine 42-cysteine 79, cysteine 49-cysteine 63, cysteine 64-cysteine 104, and cysteine 77-cysteine 113. Asparagine 92 carries N-linked (GlcNAc...) asparagine glycosylation. A lipid anchor (GPI-anchor amidated aspartate) is attached at aspartate 138. Residues 139 to 161 (AASKLAGTGLVGIVVITIAAMFY) constitute a propeptide, removed in mature form.

The protein belongs to the plant LTP family.

Its subcellular location is the cell membrane. Its function is as follows. Probable lipid transfer protein. This Arabidopsis thaliana (Mouse-ear cress) protein is Non-specific lipid transfer protein GPI-anchored 24.